The sequence spans 521 residues: GMP synthase [glutamine-hydrolyzing] (521 aa).

The region spanning 8 to 203 (KILILDFGAQ…VVDVCGCQTL (196 aa)) is the Glutamine amidotransferase type-1 domain. The Nucleophile role is filled by cysteine 85. Residues histidine 177 and glutamate 179 contribute to the active site. The GMPS ATP-PPase domain maps to 204-396 (WTAANIIDDQ…LGLPRTMVYR (193 aa)). 231–237 (SGGVDSS) serves as a coordination point for ATP.

As to quaternary structure, homodimer.

It carries out the reaction XMP + L-glutamine + ATP + H2O = GMP + L-glutamate + AMP + diphosphate + 2 H(+). It participates in purine metabolism; GMP biosynthesis; GMP from XMP (L-Gln route): step 1/1. In terms of biological role, catalyzes the synthesis of GMP from XMP. The polypeptide is GMP synthase [glutamine-hydrolyzing] (Xanthomonas campestris pv. campestris (strain B100)).